The primary structure comprises 362 residues: Probable dual-specificity RNA methyltransferase RlmN (362 aa).

Glu105 (proton acceptor) is an active-site residue. The region spanning 111 to 344 (HEYGNSICVT…VTIRREQGHD (234 aa)) is the Radical SAM core domain. A disulfide bridge connects residues Cys118 and Cys349. [4Fe-4S] cluster is bound by residues Cys125, Cys129, and Cys132. S-adenosyl-L-methionine-binding positions include 175-176 (GE), Ser207, 230-232 (SLH), and Asn306. Catalysis depends on Cys349, which acts as the S-methylcysteine intermediate.

It belongs to the radical SAM superfamily. RlmN family. The cofactor is [4Fe-4S] cluster.

Its subcellular location is the cytoplasm. The enzyme catalyses adenosine(2503) in 23S rRNA + 2 reduced [2Fe-2S]-[ferredoxin] + 2 S-adenosyl-L-methionine = 2-methyladenosine(2503) in 23S rRNA + 5'-deoxyadenosine + L-methionine + 2 oxidized [2Fe-2S]-[ferredoxin] + S-adenosyl-L-homocysteine. It catalyses the reaction adenosine(37) in tRNA + 2 reduced [2Fe-2S]-[ferredoxin] + 2 S-adenosyl-L-methionine = 2-methyladenosine(37) in tRNA + 5'-deoxyadenosine + L-methionine + 2 oxidized [2Fe-2S]-[ferredoxin] + S-adenosyl-L-homocysteine. Functionally, specifically methylates position 2 of adenine 2503 in 23S rRNA and position 2 of adenine 37 in tRNAs. The polypeptide is Probable dual-specificity RNA methyltransferase RlmN (Bacillus mycoides (strain KBAB4) (Bacillus weihenstephanensis)).